The chain runs to 606 residues: Scavenger receptor class A member 3 (606 aa).

The Cytoplasmic portion of the chain corresponds to 1–56 (MKVRSAGGDGDALCVTEEDLAGDDEDMPTFPCTQKGRPGPRCSRCQKNLSLHTSVR). A helical; Signal-anchor for type II membrane protein membrane pass occupies residues 57–77 (ILYLFLALLLVAVAVLASLVF). The Extracellular segment spans residues 78-606 (RKVDSLSEDI…PGPPGSQSFY (529 aa)). N-linked (GlcNAc...) asparagine glycosylation is found at N115, N182, N224, N257, N313, N337, N365, N400, N430, and N451. The segment at 454–606 (ILRGAPGPPG…PGPPGSQSFY (153 aa)) is disordered. In terms of domain architecture, Collagen-like 1 spans 455–513 (LRGAPGPPGPRGFKGDMGVKGPVGGRGPKGDPGSLGPLGPQGPQGQPGEAGPVGERGPV). Over residues 485–519 (DPGSLGPLGPQGPQGQPGEAGPVGERGPVGPRGFP) the composition is skewed to low complexity. Residues 526 to 535 (GSFGTGGPRG) show a composition bias toward gly residues. The Collagen-like 2 domain occupies 544-603 (GPPGPEGPPGSPGPSGPQGKPGIAGKTGSPGQRGAMGPKGEPGIQGPPGLPGPPGPPGSQ). 2 stretches are compositionally biased toward pro residues: residues 545–558 (PPGPEGPPGSPGPS) and 591–600 (PGLPGPPGPP).

As to expression, expressed ubiquitously.

It localises to the endoplasmic reticulum membrane. Its subcellular location is the golgi apparatus membrane. In terms of biological role, seems to protect cells by scavenging oxidative molecules or harmful products of oxidation. The chain is Scavenger receptor class A member 3 (SCARA3) from Homo sapiens (Human).